The chain runs to 305 residues: MMMNRQQIDSLVQQMNVATATGEVNLRVQQIVVRLLGDLFQAIEDLNMSQTELWKGLEYLTDAGQANELGLLAAGLGLEHYLDLRADEADAKAGITGGTPRTIEGPLYVAGAPESVGFARMDDGSESAHVDALIIEGNVTDTAGQIIPNAKVEIWHANSLGNYSFFDKSQSAFNLRRSIFTDTQGQYIAQTTMPVGYGCPPEGTTQALLNLLGRHGNRPSHVHYFVSAPGYRKLTTQFNIEGDKYLWDDFAFATRDGLIATALDVTDLAKIKQYNLNKAFKHIKFNFQLVQDADQVPLQRLIVVE.

Residues tyrosine 163, tyrosine 197, histidine 221, and histidine 223 each contribute to the Fe cation site.

Belongs to the intradiol ring-cleavage dioxygenase family. Homodimer. Fe(3+) is required as a cofactor.

The enzyme catalyses catechol + O2 = cis,cis-muconate + 2 H(+). It functions in the pathway aromatic compound metabolism; beta-ketoadipate pathway; 5-oxo-4,5-dihydro-2-furylacetate from catechol: step 1/3. The protein is Catechol 1,2-dioxygenase (catA) of Acinetobacter guillouiae (Acinetobacter genomosp. 11).